Consider the following 90-residue polypeptide: MKLNYVGIVISRAMPKTAKVRVAKEKFHPVVKKYVTQYQNYMVQDDLNCNVGDAVTIQPCRPRSATKRFEIIKILSTANRMSPASEISKE.

The protein belongs to the universal ribosomal protein uS17 family. As to quaternary structure, component of the mitochondrial small ribosomal subunit (mt-SSU). Mature yeast 74S mitochondrial ribosomes consist of a small (37S) and a large (54S) subunit. The 37S small subunit contains a 15S ribosomal RNA (15S mt-rRNA) and at least 32 different proteins. The 54S large subunit contains a 21S rRNA (21S mt-rRNA) and at least 45 different proteins.

It is found in the mitochondrion. Component of the mitochondrial ribosome (mitoribosome), a dedicated translation machinery responsible for the synthesis of mitochondrial genome-encoded proteins, including at least some of the essential transmembrane subunits of the mitochondrial respiratory chain. The mitoribosomes are attached to the mitochondrial inner membrane and translation products are cotranslationally integrated into the membrane. uS17m may have a meiosis-specific role as it accumulates during the middle stage of sporulation. This is Small ribosomal subunit protein uS17m from Schizosaccharomyces pombe (strain 972 / ATCC 24843) (Fission yeast).